The chain runs to 485 residues: Adenylate kinase 8 (485 aa).

Adenylate kinase regions lie at residues 58–258 (PRVF…TFVL) and 269–472 (PRIL…YTVS). Residue 67–72 (ASGKHT) coordinates ATP. The tract at residues 87 to 113 (TPESVLSSDVSLLAKEAQSYRDKGQEV) is NMP 1. Residues 140–143 (GFPK) and Gln147 contribute to the AMP site. The interval 177–206 (GKRIDTANGEVYHTTFDWPSDPTVQRNLVE) is LID 1. Residue Arg218 coordinates AMP. Position 278–283 (278–283 (GSGRSL)) interacts with ATP. The NMP 2 stretch occupies residues 298-327 (CCGQVLKEAVADQTKLGEVIQPYIENDQQV). AMP is bound by residues 325–327 (QQV), 354–357 (GFPR), and Gln361. The interval 391-424 (LCMTDPVSGERYHDIYKPAPSSEVHERLQQNPRH) is LID 2. An AMP-binding site is contributed by Arg432.

This sequence belongs to the adenylate kinase family.

It is found in the cytoplasm. It localises to the cytosol. The catalysed reaction is AMP + ATP = 2 ADP. It catalyses the reaction a 2'-deoxyribonucleoside 5'-diphosphate + ATP = a 2'-deoxyribonucleoside 5'-triphosphate + ADP. The enzyme catalyses a ribonucleoside 5'-diphosphate + ATP = a ribonucleoside 5'-triphosphate + ADP. In terms of biological role, nucleoside monophosphate (NMP) kinase that catalyzes the reversible transfer of the terminal phosphate group between nucleoside triphosphates and monophosphates. Has highest activity toward AMP, and weaker activity toward dAMP, CMP and dCMP. Also displays broad nucleoside diphosphate kinase activity. In Xenopus tropicalis (Western clawed frog), this protein is Adenylate kinase 8 (ak8).